The sequence spans 468 residues: UDP-N-acetylmuramate--L-alanine ligase (468 aa).

114 to 120 (GTHGKTT) is an ATP binding site.

This sequence belongs to the MurCDEF family.

The protein resides in the cytoplasm. The catalysed reaction is UDP-N-acetyl-alpha-D-muramate + L-alanine + ATP = UDP-N-acetyl-alpha-D-muramoyl-L-alanine + ADP + phosphate + H(+). It participates in cell wall biogenesis; peptidoglycan biosynthesis. Cell wall formation. The protein is UDP-N-acetylmuramate--L-alanine ligase of Brucella anthropi (strain ATCC 49188 / DSM 6882 / CCUG 24695 / JCM 21032 / LMG 3331 / NBRC 15819 / NCTC 12168 / Alc 37) (Ochrobactrum anthropi).